The following is a 432-amino-acid chain: Adenosylhomocysteinase (432 aa).

Substrate-binding residues include Thr56, Asp131, and Glu156. Thr157–Thr159 provides a ligand contact to NAD(+). Lys186 and Asp190 together coordinate substrate. Residues Asn191, Gly222–Gly227, Glu243, Ile299–His301, and Asn346 each bind NAD(+).

Belongs to the adenosylhomocysteinase family. Requires NAD(+) as cofactor.

The enzyme catalyses S-adenosyl-L-homocysteine + H2O = L-homocysteine + adenosine. Its pathway is amino-acid biosynthesis; L-homocysteine biosynthesis; L-homocysteine from S-adenosyl-L-homocysteine: step 1/1. Adenosylhomocysteine is a competitive inhibitor of S-adenosyl-L-methionine-dependent methyl transferase reactions; therefore adenosylhomocysteinase may play a key role in the control of methylations via regulation of the intracellular concentration of adenosylhomocysteine. The polypeptide is Adenosylhomocysteinase (Ahcy13) (Anopheles gambiae (African malaria mosquito)).